The primary structure comprises 665 residues: Coiled-coil domain-containing protein 138 (665 aa).

Phosphothreonine is present on Thr48. At Ser49 the chain carries Phosphoserine. A coiled-coil region spans residues 198–323 (QQKFAEELQK…YEFMTIQRLK (126 aa)). Ser469 carries the phosphoserine modification.

The sequence is that of Coiled-coil domain-containing protein 138 (CCDC138) from Macaca fascicularis (Crab-eating macaque).